A 572-amino-acid polypeptide reads, in one-letter code: Urease subunit alpha (572 aa).

A Urease domain is found at Gly-136–Phe-572. Ni(2+) contacts are provided by His-141, His-143, and Lys-224. N6-carboxylysine is present on Lys-224. His-226 contacts substrate. Ni(2+) contacts are provided by His-253 and His-279. His-327 (proton donor) is an active-site residue. A Ni(2+)-binding site is contributed by Asp-367.

Belongs to the metallo-dependent hydrolases superfamily. Urease alpha subunit family. Heterotrimer of UreA (gamma), UreB (beta) and UreC (alpha) subunits. Three heterotrimers associate to form the active enzyme. It depends on Ni cation as a cofactor. Carboxylation allows a single lysine to coordinate two nickel ions.

It localises to the cytoplasm. It catalyses the reaction urea + 2 H2O + H(+) = hydrogencarbonate + 2 NH4(+). Its pathway is nitrogen metabolism; urea degradation; CO(2) and NH(3) from urea (urease route): step 1/1. The polypeptide is Urease subunit alpha (Actinobacillus pleuropneumoniae serotype 5b (strain L20)).